We begin with the raw amino-acid sequence, 786 residues long: Endonuclease MutS2 (786 aa).

ATP is bound at residue 335-342 (GPNTGGKT). A Smr domain is found at 711–786 (LDLRGERFEN…GLGVTVVELK (76 aa)).

Belongs to the DNA mismatch repair MutS family. MutS2 subfamily. In terms of assembly, homodimer. Binds to stalled ribosomes, contacting rRNA.

Functionally, endonuclease that is involved in the suppression of homologous recombination and thus may have a key role in the control of bacterial genetic diversity. Acts as a ribosome collision sensor, splitting the ribosome into its 2 subunits. Detects stalled/collided 70S ribosomes which it binds and splits by an ATP-hydrolysis driven conformational change. Acts upstream of the ribosome quality control system (RQC), a ribosome-associated complex that mediates the extraction of incompletely synthesized nascent chains from stalled ribosomes and their subsequent degradation. Probably generates substrates for RQC. This is Endonuclease MutS2 from Bacillus cereus (strain AH820).